A 119-amino-acid chain; its full sequence is Protein TusC (119 aa).

It belongs to the DsrF/TusC family. As to quaternary structure, heterohexamer, formed by a dimer of trimers. The hexameric TusBCD complex contains 2 copies each of TusB, TusC and TusD. The TusBCD complex interacts with TusE.

Its subcellular location is the cytoplasm. Functionally, part of a sulfur-relay system required for 2-thiolation of 5-methylaminomethyl-2-thiouridine (mnm(5)s(2)U) at tRNA wobble positions. The sequence is that of Protein TusC from Klebsiella pneumoniae (strain 342).